Here is a 326-residue protein sequence, read N- to C-terminus: L-Ala--D-Glu endopeptidase (326 aa).

The first 19 residues, 1–19 (MKVLLSALLLLLFAFEPSA), serve as a signal peptide directing secretion. The Zn(2+) site is built by His204, Asp208, His292, and His294.

It belongs to the peptidase M23B family. It depends on Zn(2+) as a cofactor.

Functionally, L-Ala--D-Glu endopeptidase involved in production of single L-alanine side chains from tetrapeptides in the spore cortex peptidoglycan. Therefore, is required for the endospore cortex maturation. The protein is L-Ala--D-Glu endopeptidase (lytH) of Bacillus subtilis (strain 168).